The primary structure comprises 360 residues: Phospho-N-acetylmuramoyl-pentapeptide-transferase (360 aa).

10 helical membrane passes run 21 to 41, 73 to 93, 98 to 118, 132 to 152, 168 to 188, 199 to 219, 236 to 256, 263 to 283, 288 to 308, and 338 to 358; these read YITFRSIMALLTALIIGLWIG, TMGGIMILFAIGVSTLLWADL, VWFVLFILFGYGVVGFVDDYW, WKYFWLSVIALVSAFGMYAIG, VMPQLGLFYIVLTYFVIVGTS, GLAIVPLIMVAGAFALIAWAT, SGELVILCTAIVGAGLGFLWF, VFMGDVGSLSLGGALGVIAVL, LLLVVMGGVFVVEALSVILQV, and VIVRFWIITLMLVLIGLVTLK.

Belongs to the glycosyltransferase 4 family. MraY subfamily. Requires Mg(2+) as cofactor.

Its subcellular location is the cell inner membrane. The enzyme catalyses UDP-N-acetyl-alpha-D-muramoyl-L-alanyl-gamma-D-glutamyl-meso-2,6-diaminopimeloyl-D-alanyl-D-alanine + di-trans,octa-cis-undecaprenyl phosphate = di-trans,octa-cis-undecaprenyl diphospho-N-acetyl-alpha-D-muramoyl-L-alanyl-D-glutamyl-meso-2,6-diaminopimeloyl-D-alanyl-D-alanine + UMP. It functions in the pathway cell wall biogenesis; peptidoglycan biosynthesis. Its function is as follows. Catalyzes the initial step of the lipid cycle reactions in the biosynthesis of the cell wall peptidoglycan: transfers peptidoglycan precursor phospho-MurNAc-pentapeptide from UDP-MurNAc-pentapeptide onto the lipid carrier undecaprenyl phosphate, yielding undecaprenyl-pyrophosphoryl-MurNAc-pentapeptide, known as lipid I. The protein is Phospho-N-acetylmuramoyl-pentapeptide-transferase of Glaesserella parasuis serovar 5 (strain SH0165) (Haemophilus parasuis).